Consider the following 365-residue polypeptide: MTITGIIAEFNPFHNGHKYLLDQAEGLKIVAMSGNFMQRGEPAIVDKWTRAQMALENGADLVVELPFLVSVQAADFFGQGAVDILDRLGIDSLVFGTEEVRDYQKIADLYTEKGAEMEKFVENLPDSLSYPQKTQAMWKEFAGLDFSGNTPNHVLALAYAKAVAGRNIKLHPIQRQGAGYHSVNKDVDFASATALRQHQKDQDFLERFMPSVALFEQASKVIWEDYFPLLRYQILSNPDLTTIYQVNQEMAVRIKEAIKTAQSVEELVELVTTKRYTKARVRRLLTYILVQARESDLPEGIHVLGFTEKGRQHLKYLKGQVSLVSRIGKEPWDVMTQKADQIYQLGNPSIAEQNFGRVPIRIETN.

ATP contacts are provided by residues 7–20 (IAEF…HKYL), G96, N152, and R175.

The protein belongs to the TmcAL family.

It is found in the cytoplasm. It carries out the reaction cytidine(34) in elongator tRNA(Met) + acetate + ATP = N(4)-acetylcytidine(34) in elongator tRNA(Met) + AMP + diphosphate. Its function is as follows. Catalyzes the formation of N(4)-acetylcytidine (ac(4)C) at the wobble position of elongator tRNA(Met), using acetate and ATP as substrates. First activates an acetate ion to form acetyladenylate (Ac-AMP) and then transfers the acetyl group to tRNA to form ac(4)C34. This chain is tRNA(Met) cytidine acetate ligase, found in Streptococcus pneumoniae serotype 19F (strain G54).